We begin with the raw amino-acid sequence, 601 residues long: Glutamine--fructose-6-phosphate aminotransferase [isomerizing] (601 aa).

Catalysis depends on Cys-2, which acts as the Nucleophile; for GATase activity. The Glutamine amidotransferase type-2 domain occupies 2–216 (CGIVGYIGTN…DKEIVIVTKD (215 aa)). SIS domains follow at residues 282 to 421 (IIDE…EIGD) and 453 to 591 (IAGE…VDKP). Lys-596 serves as the catalytic For Fru-6P isomerization activity.

Homodimer.

It localises to the cytoplasm. The enzyme catalyses D-fructose 6-phosphate + L-glutamine = D-glucosamine 6-phosphate + L-glutamate. Functionally, catalyzes the first step in hexosamine metabolism, converting fructose-6P into glucosamine-6P using glutamine as a nitrogen source. The polypeptide is Glutamine--fructose-6-phosphate aminotransferase [isomerizing] (Listeria monocytogenes serovar 1/2a (strain ATCC BAA-679 / EGD-e)).